Reading from the N-terminus, the 443-residue chain is MSEMTPPQIVSELDKFIIGQEKAKRAVSIALRNRWRRMQLNSELRYEVTPKNILMIGPTGVGKTEIARRLAKLADSPFIKVEATKFTEVGYVGKEVDSIIRDLTDAAIKMIRIKNIKKNKVRVEEIVEEKILDVLVPTPKKNWTESEKNESLAKTIQTFRKKLREGVLDEKEIEINILSTTMGVEIMAPPGMEELTNQLQSLFQNLGGHKKSSRRLKIKDAIVLLTEEEAAKLINQEEIKKEAINAVEQNGIVFIDEIDKICRRGDSSGPDISREGVQRDLLPLVEGCTVSTKHGMVKTDHILFIASGAFQTSTPSDLIPELQGRLPIKVELQALTIDDFEKILTEPTASITAQYKALMETEGVYINFTKEGIRNIAEAAWKVNESIENIGARRLHTVLEKLMEDISFNASDNKGNTIEINSNYVEEHLDQLTSNEDLGRFIL.

Residues Ile-18, 60–65 (GVGKTE), Asp-256, Glu-321, and Arg-393 contribute to the ATP site.

It belongs to the ClpX chaperone family. HslU subfamily. In terms of assembly, a double ring-shaped homohexamer of HslV is capped on each side by a ring-shaped HslU homohexamer. The assembly of the HslU/HslV complex is dependent on binding of ATP.

The protein localises to the cytoplasm. Its function is as follows. ATPase subunit of a proteasome-like degradation complex; this subunit has chaperone activity. The binding of ATP and its subsequent hydrolysis by HslU are essential for unfolding of protein substrates subsequently hydrolyzed by HslV. HslU recognizes the N-terminal part of its protein substrates and unfolds these before they are guided to HslV for hydrolysis. The chain is ATP-dependent protease ATPase subunit HslU from Buchnera aphidicola subsp. Acyrthosiphon pisum (strain APS) (Acyrthosiphon pisum symbiotic bacterium).